The chain runs to 431 residues: Citrate synthase 1 (431 aa).

Residues H309 and D366 contribute to the active site.

The protein belongs to the citrate synthase family. Homohexamer.

The enzyme catalyses oxaloacetate + acetyl-CoA + H2O = citrate + CoA + H(+). Its pathway is carbohydrate metabolism; tricarboxylic acid cycle; isocitrate from oxaloacetate: step 1/2. This chain is Citrate synthase 1 (gltA2), found in Mycobacterium tuberculosis (strain CDC 1551 / Oshkosh).